Reading from the N-terminus, the 378-residue chain is Vacuolar membrane protein CAGL0J10076g (378 aa).

The interval 18–70 is disordered; that stretch reads RGLPRLVTTSTTPTPTTEPTTEPTTTKDETSQTSATDASTATTSTAATSTAAT. 2 stretches are compositionally biased toward low complexity: residues 25 to 41 and 48 to 70; these read TTSTTPTPTTEPTTEPT and SQTSATDASTATTSTAATSTAAT. The chain crosses the membrane as a helical span at residues 118–138; that stretch reads FIAVGSIAGAILMLIFLWWSI. Residues 299–368 form a disordered region; the sequence is NDYDTPLIPD…ARDHRKTPSM (70 aa). Over residues 321–337 the composition is skewed to basic residues; that stretch reads RSHRKTPSNDKYHRRNR. The span at 343-356 shows a compositional bias: low complexity; it reads SPSRSPTRTPIRTR.

It belongs to the PRM5 family.

It is found in the vacuole membrane. This is Vacuolar membrane protein CAGL0J10076g from Candida glabrata (strain ATCC 2001 / BCRC 20586 / JCM 3761 / NBRC 0622 / NRRL Y-65 / CBS 138) (Yeast).